Consider the following 294-residue polypeptide: Acetyl-coenzyme A carboxylase carboxyl transferase subunit beta (294 aa).

A CoA carboxyltransferase N-terminal domain is found at 25–294 (IWTKCDNCGQ…PKVDYRHCVE (270 aa)). Zn(2+)-binding residues include C29, C32, C48, and C51. The segment at 29–51 (CDNCGQLLYKKELERNLEVCPKC) adopts a C4-type zinc-finger fold.

Belongs to the AccD/PCCB family. As to quaternary structure, acetyl-CoA carboxylase is a heterohexamer composed of biotin carboxyl carrier protein (AccB), biotin carboxylase (AccC) and two subunits each of ACCase subunit alpha (AccA) and ACCase subunit beta (AccD). It depends on Zn(2+) as a cofactor.

The protein resides in the cytoplasm. The catalysed reaction is N(6)-carboxybiotinyl-L-lysyl-[protein] + acetyl-CoA = N(6)-biotinyl-L-lysyl-[protein] + malonyl-CoA. Its pathway is lipid metabolism; malonyl-CoA biosynthesis; malonyl-CoA from acetyl-CoA: step 1/1. Functionally, component of the acetyl coenzyme A carboxylase (ACC) complex. Biotin carboxylase (BC) catalyzes the carboxylation of biotin on its carrier protein (BCCP) and then the CO(2) group is transferred by the transcarboxylase to acetyl-CoA to form malonyl-CoA. The protein is Acetyl-coenzyme A carboxylase carboxyl transferase subunit beta of Blochmanniella pennsylvanica (strain BPEN).